The chain runs to 414 residues: MSRAILIVLDSFGIGATADAQRFGDAGANTLLHIAEACAAGACDSQGRTGPLRLPNLNRLGLGRAGEASCGAAAPGLEQAPEIIGTYGFAEELSSGKDTPSGHWEIAGVPVLFDWGYFTDKQQSFPPELLDAIIKEARLPGVLGNVHASGTQIIKDLGMEHRATGKPIFYTSADSVVQIACHEETFGLQRLYELCQITRKHIDPYNIARVIARPFVGASPEGFRRTGARRDFATPPHKPTLLDKLNNHGKQVIAIGKISDIYAGKGVSRSVKADGLGALVEATLTVMNETDEAAAKQDTLIFTNLVDFDMLYGHRRDVTGYAKALEDFDAMLPDLLGAMMDDDLLILTADHGCDPTWPGSDHTREHIPILMYGKRAPHGFIGARKTFADIGQTLAEYFQLDRLDFGESFLVADK.

Residues D10, D309, H314, D350, H351, and H362 each coordinate Mn(2+).

The protein belongs to the phosphopentomutase family. Mn(2+) serves as cofactor.

It is found in the cytoplasm. It carries out the reaction 2-deoxy-alpha-D-ribose 1-phosphate = 2-deoxy-D-ribose 5-phosphate. The catalysed reaction is alpha-D-ribose 1-phosphate = D-ribose 5-phosphate. The protein operates within carbohydrate degradation; 2-deoxy-D-ribose 1-phosphate degradation; D-glyceraldehyde 3-phosphate and acetaldehyde from 2-deoxy-alpha-D-ribose 1-phosphate: step 1/2. Isomerase that catalyzes the conversion of deoxy-ribose 1-phosphate (dRib-1-P) and ribose 1-phosphate (Rib-1-P) to deoxy-ribose 5-phosphate (dRib-5-P) and ribose 5-phosphate (Rib-5-P), respectively. This Hahella chejuensis (strain KCTC 2396) protein is Phosphopentomutase.